The chain runs to 216 residues: Inner membrane assembly complex subunit 22 (216 aa).

The N-terminal 26 residues, 1–26, are a transit peptide targeting the mitochondrion; that stretch reads MFMARQVLRNGLFLRSLAPIKITART. Over 27–43 the chain is Mitochondrial matrix; that stretch reads VASANAGIKRKSRFDKT. A helical membrane pass occupies residues 44 to 63; the sequence is MIKPLLLVMIFGSILNAVIA. Residues 64–93 adopt a coiled-coil conformation; it reads EKRNIIDMERKYKLKLDKLKELIRRVHDNN. Residues 64–216 lie on the Mitochondrial intermembrane side of the membrane; that stretch reads EKRNIIDMER…KEHDKIPKFL (153 aa).

In terms of assembly, component of the inner membrane assembly (INA) complex, composed of INA17 and INA22. Interacts with a subset of F(1)F(0)-ATP synthase subunits of the F(1)-domain and the peripheral stalk.

Its subcellular location is the mitochondrion inner membrane. In terms of biological role, component of the INA complex (INAC) that promotes the biogenesis of mitochondrial F(1)F(0)-ATP synthase. INAC facilitates the assembly of the peripheral stalk and promotes the assembly of the catalytic F(1)-domain with the membrane-embedded F(0)-domain. The chain is Inner membrane assembly complex subunit 22 from Saccharomyces cerevisiae (strain ATCC 204508 / S288c) (Baker's yeast).